The sequence spans 372 residues: MLLNDIISGKLVDSVYIIAEIGQNHQGCVETAKKMIWEAKKAGCHCVKFQKSDLPAKFTRSALDREYISDHAWGKTYGEHKEYLEFSKDQYLQLQAHCKELNVDFTASAMDERSLEFLSALNVPFIKIGSGDANNFPLLKKAANLNLPLVISTGMQTMQTVERIVQTMRESGKEDYALMHCVSSYPTDPKDCSLQLISVLRTRFPNVAIGYSGHELGVIISQAAVLLGARIVERHFTLDKSQKGSDHRCSLEPQELKALTTAITNFKLSSVPMPPQEIVKKLNGDEELEAALQHVESKTILPCELPCRNKLGKSIVAARNLNKGYRLQLADMAIKVSEPSGLTAEDFLDLVGKELADNIGEDEPILGNSIIN.

Positions Ser314 to Asn372 constitute an AFP-like domain.

It carries out the reaction aldehydo-N-acetyl-D-mannosamine 6-phosphate + phosphoenolpyruvate + H2O = N-acetylneuraminate 9-phosphate + phosphate. The enzyme catalyses aldehydo-D-mannose 6-phosphate + phosphoenolpyruvate + H2O = 3-deoxy-D-glycero-beta-D-galacto-non-2-ulopyranosonate 9-phosphate + phosphate. In terms of biological role, catalyzes the condensation of phosphoenolpyruvate (PEP) and N-acetylmannosamine 6-phosphate (ManNAc-6-P) or D-mannose 6-phosphate (Man-6-P) to generate the phosphorylated forms of both the sialic acids N-acetylneuraminic acid (Neu5Ac) and deaminoneuraminic acid (KDN), respectively. Essential for biosynthesis of sialic acids in neurons of the central nervous system. The chain is N-acetylneuraminate-9-phosphate synthase from Drosophila melanogaster (Fruit fly).